The following is a 606-amino-acid chain: Aspartate--tRNA(Asp/Asn) ligase (606 aa).

Glu-172 serves as a coordination point for L-aspartate. Positions 196 to 199 (QLFK) are aspartate. Position 218 (Arg-218) interacts with L-aspartate. ATP-binding positions include 218–220 (RDE) and Gln-227. His-448 provides a ligand contact to L-aspartate. Glu-482 contributes to the ATP binding site. Arg-489 contacts L-aspartate. 534 to 537 (GWDR) is an ATP binding site.

The protein belongs to the class-II aminoacyl-tRNA synthetase family. Type 1 subfamily. As to quaternary structure, homodimer.

The protein resides in the cytoplasm. It catalyses the reaction tRNA(Asx) + L-aspartate + ATP = L-aspartyl-tRNA(Asx) + AMP + diphosphate. Aspartyl-tRNA synthetase with relaxed tRNA specificity since it is able to aspartylate not only its cognate tRNA(Asp) but also tRNA(Asn). Reaction proceeds in two steps: L-aspartate is first activated by ATP to form Asp-AMP and then transferred to the acceptor end of tRNA(Asp/Asn). This is Aspartate--tRNA(Asp/Asn) ligase from Saccharopolyspora erythraea (strain ATCC 11635 / DSM 40517 / JCM 4748 / NBRC 13426 / NCIMB 8594 / NRRL 2338).